The chain runs to 292 residues: 4-diphosphocytidyl-2-C-methyl-D-erythritol kinase (292 aa).

The active site involves K10. 94–104 (PVAAGLAGGSS) is a binding site for ATP. D136 is an active-site residue.

Belongs to the GHMP kinase family. IspE subfamily.

It catalyses the reaction 4-CDP-2-C-methyl-D-erythritol + ATP = 4-CDP-2-C-methyl-D-erythritol 2-phosphate + ADP + H(+). The protein operates within isoprenoid biosynthesis; isopentenyl diphosphate biosynthesis via DXP pathway; isopentenyl diphosphate from 1-deoxy-D-xylulose 5-phosphate: step 3/6. Functionally, catalyzes the phosphorylation of the position 2 hydroxy group of 4-diphosphocytidyl-2C-methyl-D-erythritol. The protein is 4-diphosphocytidyl-2-C-methyl-D-erythritol kinase of Brevibacillus brevis (strain 47 / JCM 6285 / NBRC 100599).